Here is a 294-residue protein sequence, read N- to C-terminus: Elongation factor Ts (294 aa).

An involved in Mg(2+) ion dislocation from EF-Tu region spans residues 80–83 (TDFV).

It belongs to the EF-Ts family.

The protein resides in the cytoplasm. Functionally, associates with the EF-Tu.GDP complex and induces the exchange of GDP to GTP. It remains bound to the aminoacyl-tRNA.EF-Tu.GTP complex up to the GTP hydrolysis stage on the ribosome. This chain is Elongation factor Ts, found in Polynucleobacter necessarius subsp. necessarius (strain STIR1).